Reading from the N-terminus, the 71-residue chain is Prokaryotic ubiquitin-like protein Pup (71 aa).

Positions 1–18 (MPEKDTGGQHRATRRTEE) are enriched in basic and acidic residues. The tract at residues 1-36 (MPEKDTGGQHRATRRTEEHDETIDEATATSDVQERR) is disordered. Positions 27-65 (TATSDVQERREKLDADVDAILDEIDDVLEENAEEFVRSY) are ARC ATPase binding. Residues 30 to 59 (SDVQERREKLDADVDAILDEIDDVLEENAE) are a coiled coil. Glu-71 participates in a covalent cross-link: Isoglutamyl lysine isopeptide (Glu-Lys) (interchain with K-? in acceptor proteins).

This sequence belongs to the prokaryotic ubiquitin-like protein family. Strongly interacts with the proteasome-associated ATPase ARC through a hydrophobic interface; the interacting region of Pup lies in its C-terminal half. There is one Pup binding site per ARC hexamer ring.

It participates in protein degradation; proteasomal Pup-dependent pathway. In terms of biological role, protein modifier that is covalently attached to lysine residues of substrate proteins, thereby targeting them for proteasomal degradation. The tagging system is termed pupylation. The sequence is that of Prokaryotic ubiquitin-like protein Pup from Acidothermus cellulolyticus (strain ATCC 43068 / DSM 8971 / 11B).